A 3084-amino-acid chain; its full sequence is Protein prune homolog 2 (3084 aa).

Residue methionine 1 is modified to N-acetylmethionine. Positions 109–111 (GSH) match the DHH motif motif. Disordered stretches follow at residues 394 to 417 (QPSS…QADG), 430 to 465 (TIRS…PGFD), 500 to 536 (ASEQ…PKGL), 672 to 733 (EQES…QKEE), 811 to 837 (KNTW…MGQS), 861 to 907 (EIWG…KATG), 947 to 1080 (SASN…DDPS), 1224 to 1316 (NMPS…GQSE), 1338 to 1395 (SGVN…LEVE), 1502 to 1543 (MNST…DLHD), 1600 to 1652 (GFGK…TTKR), 1776 to 1799 (ETGT…DPDK), 1836 to 1886 (GELE…GDKS), 1961 to 1980 (DENG…QENQ), 2071 to 2196 (ILTH…NPEV), 2410 to 2782 (MLLS…SHPR), 2797 to 2816 (QSEG…EIDI), and 2825 to 2859 (DEAD…AEEE). Residues 501–511 (SEQSQPSSHSA) are compositionally biased toward polar residues. 2 stretches are compositionally biased toward basic and acidic residues: residues 682–696 (PWKD…RRTS) and 723–733 (GNKEAQDQKEE). Composition is skewed to polar residues over residues 811–828 (KNTW…SGQE) and 865–891 (KNNS…NNSK). The segment covering 962–975 (TNYSTSDSYTSPTY) has biased composition (low complexity). A compositionally biased stretch (basic and acidic residues) spans 977-999 (GDEKEIANKPVDKDNGFEAKDAE). A compositionally biased stretch (polar residues) spans 1009–1019 (ATSSQQSQRNR). Positions 1034 to 1063 (HTEDKPEGNDAHHPDSDALKTEHAEDKNAS) are enriched in basic and acidic residues. A compositionally biased stretch (low complexity) spans 1071-1080 (SSPSSYDDPS). Basic and acidic residues predominate over residues 1248–1261 (SPRHSNGKDSHMLE). Polar residues predominate over residues 1265-1294 (LSESGGLTSQPVNQDTWGDSQGDTASSVTG). Over residues 1350-1366 (KPRDQEFSSSDAFEHQD) the composition is skewed to basic and acidic residues. Low complexity predominate over residues 1368–1378 (SSASGKISSLS). Polar residues-rich tracts occupy residues 1779–1792 (TMDT…STEA), 1854–1869 (PIQN…STNP), and 1965–1980 (CVST…QENQ). The span at 2089-2103 (VCHDSEGEQKMEKHT) shows a compositional bias: basic and acidic residues. Residues 2162-2174 (SSKPASSRSSPEP) show a composition bias toward low complexity. 3 stretches are compositionally biased toward basic and acidic residues: residues 2416-2428 (PDHR…ETNI), 2506-2525 (KQTE…EDHQ), and 2535-2553 (SHEK…RENI). A compositionally biased stretch (polar residues) spans 2569–2584 (PETQLSGTPDTCQSEF). The segment covering 2595–2606 (RMSSSSNHESAS) has biased composition (low complexity). Residues 2607–2617 (LENPAQDQSWM) are compositionally biased toward polar residues. The span at 2653–2664 (KGPKSQVLERNK) shows a compositional bias: basic and acidic residues. Acidic residues predominate over residues 2806–2816 (DNLDSPDEIDI). Positions 2840-2849 (ANKSSGQESE) are enriched in polar residues. The 162-residue stretch at 2879–3040 (DMKVIEPYRR…SIIKYDEEKS (162 aa)) folds into the CRAL-TRIO domain.

This sequence belongs to the PPase class C family. Prune subfamily.

Its subcellular location is the cytoplasm. Functionally, may play an important role in regulating differentiation, survival and aggressiveness of the tumor cells. The sequence is that of Protein prune homolog 2 (Prune2) from Mus musculus (Mouse).